Here is a 301-residue protein sequence, read N- to C-terminus: Phospholipase A1 VesT1.02 (301 aa).

Disulfide bonds link Cys87/Cys294, Cys176/Cys245, Cys181/Cys262, Cys219/Cys228, Cys240/Cys246, and Cys267/Cys269. Ser137 serves as the catalytic Nucleophile. Residue Asp165 is the Charge relay system of the active site. The active-site Charge relay system is the His230.

This sequence belongs to the AB hydrolase superfamily. Lipase family. Is not glycosylated. As to expression, expressed by the venom gland.

It is found in the secreted. The catalysed reaction is a 1,2-diacyl-sn-glycero-3-phosphocholine + H2O = a 2-acyl-sn-glycero-3-phosphocholine + a fatty acid + H(+). In terms of biological role, catalyzes the hydrolysis of phosphatidylcholine with phospholipase A1 activity. Shows hemolytic activity. This Vespa tropica (Greater banded hornet) protein is Phospholipase A1 VesT1.02.